Here is a 155-residue protein sequence, read N- to C-terminus: Small ribosomal subunit protein uS7cz/uS7cy (155 aa).

Belongs to the universal ribosomal protein uS7 family. As to quaternary structure, part of the 30S ribosomal subunit.

The protein resides in the plastid. The protein localises to the chloroplast. Its function is as follows. One of the primary rRNA binding proteins, it binds directly to 16S rRNA where it nucleates assembly of the head domain of the 30S subunit. The polypeptide is Small ribosomal subunit protein uS7cz/uS7cy (rps7-A) (Ipomoea purpurea (Common morning glory)).